The chain runs to 473 residues: Photosystem II CP43 reaction center protein (473 aa).

The propeptide occupies 1 to 14 (MKTLYSLRRFYHVE). T15 carries the N-acetylthreonine modification. T15 is modified (phosphothreonine). The next 5 helical transmembrane spans lie at 69-93 (LFEV…PHLA), 134-155 (LLGP…KDRN), 178-200 (KALY…RKIT), 255-275 (KPFA…LSYS), and 291-312 (WFNN…ASQA). Position 367 (E367) interacts with [CaMn4O5] cluster. The helical transmembrane segment at 447-471 (RARAAAAGFEKGIDRDFEPVLSMTP) threads the bilayer.

Belongs to the PsbB/PsbC family. PsbC subfamily. PSII is composed of 1 copy each of membrane proteins PsbA, PsbB, PsbC, PsbD, PsbE, PsbF, PsbH, PsbI, PsbJ, PsbK, PsbL, PsbM, PsbT, PsbX, PsbY, PsbZ, Psb30/Ycf12, at least 3 peripheral proteins of the oxygen-evolving complex and a large number of cofactors. It forms dimeric complexes. The cofactor is Binds multiple chlorophylls and provides some of the ligands for the Ca-4Mn-5O cluster of the oxygen-evolving complex. It may also provide a ligand for a Cl- that is required for oxygen evolution. PSII binds additional chlorophylls, carotenoids and specific lipids..

It is found in the plastid. It localises to the chloroplast thylakoid membrane. In terms of biological role, one of the components of the core complex of photosystem II (PSII). It binds chlorophyll and helps catalyze the primary light-induced photochemical processes of PSII. PSII is a light-driven water:plastoquinone oxidoreductase, using light energy to abstract electrons from H(2)O, generating O(2) and a proton gradient subsequently used for ATP formation. The protein is Photosystem II CP43 reaction center protein of Draba nemorosa (Woodland whitlowgrass).